Consider the following 343-residue polypeptide: Flavonoid 4'-O-methyltransferase 4 (343 aa).

Aspartate 211 is a binding site for S-adenosyl-L-methionine. Histidine 249 (proton acceptor) is an active-site residue.

This sequence belongs to the class I-like SAM-binding methyltransferase superfamily. Cation-independent O-methyltransferase family. As to quaternary structure, homodimer.

The enzyme catalyses apigenin + S-adenosyl-L-methionine = acacetin + S-adenosyl-L-homocysteine + H(+). The catalysed reaction is kaempferol + S-adenosyl-L-methionine = kaempferide + S-adenosyl-L-homocysteine + H(+). It catalyses the reaction isorhamnetin + S-adenosyl-L-methionine = 3',4'-O-dimethylquercetin + S-adenosyl-L-homocysteine + 2 H(+). It carries out the reaction scutellarein + S-adenosyl-L-methionine = scutellarein 4'-methyl ether + S-adenosyl-L-homocysteine + H(+). The enzyme catalyses (2S)-naringenin + S-adenosyl-L-methionine = (2S)-naringenin 4'-methyl ether + S-adenosyl-L-homocysteine + H(+). The catalysed reaction is 4',7,8-trihydroxyflavone + S-adenosyl-L-methionine = 7,8-dihydroxy-4'-methoxyflavone + S-adenosyl-L-homocysteine + H(+). It catalyses the reaction taxifolin + S-adenosyl-L-methionine = taxifolin 4'-methyl ether + S-adenosyl-L-homocysteine + H(+). Its pathway is flavonoid metabolism. Functionally, flavonoid 4'-O-methyltransferase involved in the biosynthesis of polymethoxylated flavonoids natural products such as pebrellin, aroma compounds which contribute to the flavor of peppermint, and exhibit pharmacological activities such as anti-allergic, anti-oxidant, antibacterial, anti-proliferative, and anti-inflammatory effects. Catalyzes S-adenosylmethionine-dependent regioselective 4'-O-methylation of flavonoids; active on various hydroxylated flavonoid substrates, including isorhamnetin, kaempferol, apigenin (API), scutellarein (6-hydroxy-apigenin, 6-OH-API, SCU), taxifolin, 7,8,4'-trihydroxy-flavone and naringenin (NAR), and, with a lower efficiency, quercetin, rhamnetin, luteolin (LUT) and 7,8,3',4'-tetrahydroxy-flavone. The protein is Flavonoid 4'-O-methyltransferase 4 of Mentha piperita (Peppermint).